The following is a 326-amino-acid chain: DnaJ homolog subfamily B member 6 (326 aa).

One can recognise a J domain in the interval 3 to 69 (DYYEVLGVQK…KKRDIYDRFG (67 aa)). The segment at 249-326 (ALPFQPTNTR…KKKKSTKGSY (78 aa)) is disordered. Serine 277 carries the post-translational modification Phosphoserine.

Homooligomer.

Its subcellular location is the cytoplasm. The protein resides in the perinuclear region. The protein localises to the nucleus. In terms of biological role, has a stimulatory effect on the ATPase activity of HSP70 in a dose-dependent and time-dependent manner and hence acts as a co-chaperone of HSP70. Plays an indispensable role in the organization of KRT8/KRT18 filaments. Acts as an endogenous molecular chaperone for neuronal proteins including huntingtin. Suppresses aggregation and toxicity of polyglutamine-containing, aggregation-prone proteins. Also reduces cellular toxicity and caspase-3 activity. This is DnaJ homolog subfamily B member 6 from Gallus gallus (Chicken).